The primary structure comprises 466 residues: Asparagine--tRNA ligase (466 aa).

Belongs to the class-II aminoacyl-tRNA synthetase family. As to quaternary structure, homodimer.

The protein localises to the cytoplasm. It carries out the reaction tRNA(Asn) + L-asparagine + ATP = L-asparaginyl-tRNA(Asn) + AMP + diphosphate + H(+). This Shewanella sp. (strain MR-4) protein is Asparagine--tRNA ligase.